Consider the following 1076-residue polypeptide: Serine/threonine-protein phosphatase 6 regulatory ankyrin repeat subunit C (1076 aa).

ANK repeat units lie at residues 7–36 (TDQPPLVQAIFSRDVEEVRSLLSQKENINV), 40–69 (ERRTPLHAAAYVGDVPILQLLLMSGANVNA), 73–102 (LWLTPLHRAAASRNEKVLGLLLAHSADVNA), 106–135 (LWQTPLHVAAANRATKCAEALAPLLSSLNV), 139–168 (SGRSALHHAVHSGHLETVNLLLNKGASLNV), 172–201 (KERQPLHWAAFLGHLEVLKLLVARGADLGC), 205–234 (KGYGLLHTAAASGQIEVVKYLLRMGAEIDE), 238–267 (FGNTALHIACYLGQDAVAIELVNAGANVNQ), 271–301 (KGFTPLHVAAVSTNGALCLELLVNNGADVNY), 305–334 (EGKSPLHMAAIHGRFTRSQILIQNGSEIDC), 338–367 (FGNTPLHVAARYGHELLISTLMTNGADTAR), 371–400 (HDMFPLHLAVLFGFSDCCRKLLSSGQLYSI), 422–451 (LGRTCLHAAASGGNVECLNLLLSSGADLRR), 455–484 (FGRTPLHYAAANGSYQCAVTLVTAGAGVNE), 488–545 (KGCS…DPSL), 549–579 (QGYTAVHYAAAYGNRQNLELLLEMSFNCLED), 584–613 (IPVSPLHLAAYNGHCEALKTLAETLVNLDV), 617–646 (KGRTALFLATERGSTECVEVLTAHGASALI), 651–680 (RKWTPLHAAAASGHTDSLHLLIDSGERADI), 687–716 (YGQTPLMLAIMNGHVDCVHLLLEKGSTADA), 720–749 (RGRTALHRGAVTGCEDCLAALLDHDAFVLC), 753–782 (KGRTPIHLASACGHTAVLRTLLQAALSTDP), 790–819 (SGYSPMHWASYTGHEDCLELLLEHSPFSYL), 822–852 (NPFTPLHCAVINNQDSTTEMLLGALGAKIVN), 857–886 (KGRTPLHAAAFADNVSGLRMLLQHQAEVNA), 890–920 (TGRTALMTAAENGQTAAVEFLLYRGKADLTV), 924–953 (NKNTALHLACSKGHEKCALMILAETQDLGL), and 960–989 (ALQMPLHIAARNGLASVVQALLSHGATVLA). The segment covering 502-514 (YRRAEPHTPSSHD) has biased composition (basic and acidic residues). The tract at residues 502–522 (YRRAEPHTPSSHDAEEDEPLK) is disordered. Phosphoserine occurs at positions 1028 and 1075.

As to quaternary structure, protein phosphatase 6 (PP6) holoenzyme is proposed to be a heterotrimeric complex formed by the catalytic subunit, a SAPS domain-containing subunit (PP6R) and an ankyrin repeat-domain containing regulatory subunit (ARS). Interacts with PPP6R1.

Its function is as follows. Putative regulatory subunit of protein phosphatase 6 (PP6) that may be involved in the recognition of phosphoprotein substrates. The sequence is that of Serine/threonine-protein phosphatase 6 regulatory ankyrin repeat subunit C (ANKRD52) from Homo sapiens (Human).